A 174-amino-acid polypeptide reads, in one-letter code: Co-chaperone protein HscB (174 aa).

One can recognise a J domain in the interval 2–74 (NYFTLFDLPR…LNRAIYFLCL (73 aa)).

It belongs to the HscB family. In terms of assembly, interacts with HscA and stimulates its ATPase activity. Interacts with IscU.

Co-chaperone involved in the maturation of iron-sulfur cluster-containing proteins. Seems to help targeting proteins to be folded toward HscA. The chain is Co-chaperone protein HscB from Buchnera aphidicola subsp. Acyrthosiphon pisum (strain Tuc7).